A 158-amino-acid polypeptide reads, in one-letter code: Acireductone dioxygenase (158 aa).

4 residues coordinate Fe(2+): histidine 81, histidine 83, glutamate 87, and histidine 126. Ni(2+) is bound by residues histidine 81, histidine 83, glutamate 87, and histidine 126.

This sequence belongs to the acireductone dioxygenase (ARD) family. Requires Fe(2+) as cofactor. Ni(2+) serves as cofactor.

It is found in the cytoplasm. It localises to the nucleus. The catalysed reaction is 1,2-dihydroxy-5-(methylsulfanyl)pent-1-en-3-one + O2 = 4-methylsulfanyl-2-oxobutanoate + formate + 2 H(+). It catalyses the reaction 1,2-dihydroxy-5-(methylsulfanyl)pent-1-en-3-one + O2 = 3-(methylsulfanyl)propanoate + CO + formate + 2 H(+). The protein operates within amino-acid biosynthesis; L-methionine biosynthesis via salvage pathway; L-methionine from S-methyl-5-thio-alpha-D-ribose 1-phosphate: step 5/6. Its function is as follows. Catalyzes 2 different reactions between oxygen and the acireductone 1,2-dihydroxy-3-keto-5-methylthiopentene (DHK-MTPene) depending upon the metal bound in the active site. Fe-containing acireductone dioxygenase (Fe-ARD) produces formate and 2-keto-4-methylthiobutyrate (KMTB), the alpha-ketoacid precursor of methionine in the methionine recycle pathway. Ni-containing acireductone dioxygenase (Ni-ARD) produces methylthiopropionate, carbon monoxide and formate, and does not lie on the methionine recycle pathway. In Metarhizium robertsii (strain ARSEF 23 / ATCC MYA-3075) (Metarhizium anisopliae (strain ARSEF 23)), this protein is Acireductone dioxygenase.